Here is a 233-residue protein sequence, read N- to C-terminus: Isoprenyl transferase (233 aa).

The active site involves aspartate 12. Aspartate 12 serves as a coordination point for Mg(2+). Substrate-binding positions include 13 to 16 (GNGR), tryptophan 17, arginine 25, histidine 29, and 57 to 59 (STE). The Proton acceptor role is filled by asparagine 60. Substrate is bound by residues tryptophan 61, arginine 63, arginine 178, and 184 to 186 (RLS). Mg(2+) is bound at residue glutamate 197.

This sequence belongs to the UPP synthase family. In terms of assembly, homodimer. Requires Mg(2+) as cofactor.

Catalyzes the condensation of isopentenyl diphosphate (IPP) with allylic pyrophosphates generating different type of terpenoids. The protein is Isoprenyl transferase of Thermotoga maritima (strain ATCC 43589 / DSM 3109 / JCM 10099 / NBRC 100826 / MSB8).